We begin with the raw amino-acid sequence, 500 residues long: Serine carboxypeptidase 3 (500 aa).

The N-terminal stretch at Met1–Ala21 is a signal peptide. A propeptide spanning residues Gly22–Thr73 is cleaved from the precursor. Cystine bridges form between Cys126/Cys366, Cys294/Cys309, and Cys332/Cys337. An N-linked (GlcNAc...) asparagine glycan is attached at Asn144. The active site involves Ser216. The active site involves Asp404. Cys407 is a binding site for substrate. The active site involves His461. The propeptide occupies Glu485–Ile500.

This sequence belongs to the peptidase S10 family. Monomer.

It catalyses the reaction Release of a C-terminal amino acid with broad specificity.. The chain is Serine carboxypeptidase 3 (CBP3) from Triticum aestivum (Wheat).